Reading from the N-terminus, the 354-residue chain is MMVDNQTPDSSTLSTASTPVYAEPQLTEELLERFDSFAQKVARHDGVSAFSEQTRIELSKALRESTLTPPRFFVAEDNGTLAAVFVALTPANDEDTGVIEAAVAPEYRGQGVGSAFFDHAVRQLGDDATRYRLWVHGSATDTGIESPAHAFATLHGFEPVRVLYKMVLPLDAQTREELVERSDARTLPENLRMRTFTGADEFPWLRVNAAAFAHHPEQGKLTLADLRERTGSPWFRPEGFFIASEVEDDSAIAAFTWTKIPTGQEQSELSPSGEIYVVGVNPQAQGGGLGRTLTLRALAYLACAEDENGEPLRAIDLYVDADNTAAYSLYTSLGFGVATVDRMYAPAQQDEPAA.

Polar residues predominate over residues 1–18 (MMVDNQTPDSSTLSTAST). Positions 1–21 (MMVDNQTPDSSTLSTASTPVY) are disordered. N-acetyltransferase domains lie at 21–176 (YAEP…QTRE) and 191–354 (LRMR…EPAA). A 1D-myo-inositol 2-(L-cysteinylamino)-2-deoxy-alpha-D-glucopyranoside-binding site is contributed by glutamate 52. An acetyl-CoA-binding site is contributed by 101–103 (AAV). Positions 217, 259, and 274 each coordinate 1D-myo-inositol 2-(L-cysteinylamino)-2-deoxy-alpha-D-glucopyranoside. Acetyl-CoA-binding positions include 278-280 (VGV) and 285-291 (QGGGLGR). Tyrosine 318 contacts 1D-myo-inositol 2-(L-cysteinylamino)-2-deoxy-alpha-D-glucopyranoside.

The protein belongs to the acetyltransferase family. MshD subfamily. As to quaternary structure, monomer.

It catalyses the reaction 1D-myo-inositol 2-(L-cysteinylamino)-2-deoxy-alpha-D-glucopyranoside + acetyl-CoA = mycothiol + CoA + H(+). Catalyzes the transfer of acetyl from acetyl-CoA to desacetylmycothiol (Cys-GlcN-Ins) to form mycothiol. The sequence is that of Mycothiol acetyltransferase from Rothia mucilaginosa (strain DY-18) (Stomatococcus mucilaginosus).